The chain runs to 865 residues: MPGLALLGLTALLGLTALLDHGEGATSCLSQQLRMQGDYVLGGLFPLGSAEGTGLGDGLQPNATVCTRFSSLGLLWALAVKMAVEEINNGSALLPGLHLGYDLFDTCSEPMVAMKPSLVFMAKAGSCSIAAYCNYTQYQPRVLAVIGPHSSELALVTGKFFSFFLVPQVSYGASTDRLSNREIFPSFFRTVPSDQVQVAAMVELLEELGWNWVAAVGSDDEYGRQGLSLFSGLASARGICIAHEGLVPLPPGSLRLGALQGLLRQVNQSSVQVVVLFSSAHAARTLFSYSIRCKLSPKVWVASEAWLTSDLVMTLPGMPGVGTVLGFLQQGAPMPEFPSYVRTRLALAADPAFCASLDAEQPGLEEHVVGPRCPQCDHVTLENLSAGLLHHQTFAAYAAVYGVAQALHNTLRCNASGCPRREPVRPWQLLENMYNVSFRARGLALQFDASGNVNVDYDLKLWVWQDPTPELRTVGTFKGRLELWRSQMCWHTPGKQQPVSQCSRQCKEGQVRRVKGFHSCCYNCVDCKAGSYQRNPDDLLCTQCDQDQWSPDRSTRCFARKPMFLAWGEPAVLLLLALLALALGLALAALGLFLWHSDSPLVQASGGPRACFGLACLGLVCLSVLLFPGQPGPASCLAQQPLFHLPLTGCLSTFFLQAAEIFVGSELPPSWAEKMRGRLRGPWAWLVVLLAMLAEAALCAWYLVAFPPEVVTDWRVLPTEALVHCHVHSWISFGLVHATNAMLAFLCFLGTFLVQSRPGRYNGARGLTFAMLAYFITWISFVPLFANVHVAYQPAVQMGTILLCALGILATFHLPKCYLLLQRPELNTPEFFLEDNARAQGSSWGQGRGESGQKQVTPDPVTSPQ.

A signal peptide spans 1–24 (MPGLALLGLTALLGLTALLDHGEG). Residues 25 to 573 (ATSCLSQQLR…FLAWGEPAVL (549 aa)) lie on the Extracellular side of the membrane. N-linked (GlcNAc...) asparagine glycans are attached at residues Asn-134 and Asn-267. A helical transmembrane segment spans residues 574–594 (LLLALLALALGLALAALGLFL). Topologically, residues 595-606 (WHSDSPLVQASG) are cytoplasmic. The helical transmembrane segment at 607 to 627 (GPRACFGLACLGLVCLSVLLF) threads the bilayer. The Extracellular portion of the chain corresponds to 628-642 (PGQPGPASCLAQQPL). Residues 643 to 663 (FHLPLTGCLSTFFLQAAEIFV) form a helical membrane-spanning segment. Topologically, residues 664–685 (GSELPPSWAEKMRGRLRGPWAW) are cytoplasmic. A helical membrane pass occupies residues 686 to 706 (LVVLLAMLAEAALCAWYLVAF). Residues 707-732 (PPEVVTDWRVLPTEALVHCHVHSWIS) lie on the Extracellular side of the membrane. Residues 733 to 753 (FGLVHATNAMLAFLCFLGTFL) traverse the membrane as a helical segment. Residues 754-765 (VQSRPGRYNGAR) are Cytoplasmic-facing. A helical transmembrane segment spans residues 766 to 786 (GLTFAMLAYFITWISFVPLFA). Topologically, residues 787–794 (NVHVAYQP) are extracellular. A helical membrane pass occupies residues 795–815 (AVQMGTILLCALGILATFHLP). Residues 816-865 (KCYLLLQRPELNTPEFFLEDNARAQGSSWGQGRGESGQKQVTPDPVTSPQ) lie on the Cytoplasmic side of the membrane. The tract at residues 840–865 (QGSSWGQGRGESGQKQVTPDPVTSPQ) is disordered. Polar residues predominate over residues 852–865 (GQKQVTPDPVTSPQ).

It belongs to the G-protein coupled receptor 3 family. TAS1R subfamily. As to quaternary structure, forms homodimers or a heterodimer with TAS1R1. Expressed in taste buds.

Its subcellular location is the cell membrane. Its function is as follows. Putative taste receptor. TAS1R1/TAS1R3 responds to the umami taste stimulus (the taste of monosodium glutamate). This Felis catus (Cat) protein is Taste receptor type 1 member 3 (TAS1R3).